Consider the following 217-residue polypeptide: Large ribosomal subunit protein uL3 (217 aa).

The protein belongs to the universal ribosomal protein uL3 family. Part of the 50S ribosomal subunit. Forms a cluster with proteins L14 and L19.

Its function is as follows. One of the primary rRNA binding proteins, it binds directly near the 3'-end of the 23S rRNA, where it nucleates assembly of the 50S subunit. This chain is Large ribosomal subunit protein uL3, found in Mycolicibacterium paratuberculosis (strain ATCC BAA-968 / K-10) (Mycobacterium paratuberculosis).